Consider the following 136-residue polypeptide: Protein NrdI (136 aa).

The protein belongs to the NrdI family.

Probably involved in ribonucleotide reductase function. The chain is Protein NrdI from Escherichia coli (strain 55989 / EAEC).